The following is a 452-amino-acid chain: tRNA modification GTPase MnmE (452 aa).

Positions 21, 78, and 118 each coordinate (6S)-5-formyl-5,6,7,8-tetrahydrofolate. A TrmE-type G domain is found at 214–375; that stretch reads GMKVVIAGRP…LREHLKQAMG (162 aa). Asparagine 224 contacts K(+). GTP contacts are provided by residues 224–229, 243–249, and 268–271; these read NAGKSS, TDIAGTT, and DTAG. Position 228 (serine 228) interacts with Mg(2+). Residues threonine 243, isoleucine 245, and threonine 248 each coordinate K(+). Residue threonine 249 coordinates Mg(2+). Lysine 452 lines the (6S)-5-formyl-5,6,7,8-tetrahydrofolate pocket.

The protein belongs to the TRAFAC class TrmE-Era-EngA-EngB-Septin-like GTPase superfamily. TrmE GTPase family. Homodimer. Heterotetramer of two MnmE and two MnmG subunits. K(+) serves as cofactor.

The protein resides in the cytoplasm. Functionally, exhibits a very high intrinsic GTPase hydrolysis rate. Involved in the addition of a carboxymethylaminomethyl (cmnm) group at the wobble position (U34) of certain tRNAs, forming tRNA-cmnm(5)s(2)U34. The sequence is that of tRNA modification GTPase MnmE from Haemophilus influenzae (strain PittEE).